Reading from the N-terminus, the 363-residue chain is MHVVLAGGGTAGHIEPALALADALRRQDPTVGITALGTERGLETRLVPERGYDLALIPAVPLPRKPTPELITVPGRLRGTIKAAEQILERTKADAVVGFGGYVALPGYLAAKRLGVPIVIHEANARPGLANKIGSRYAAQVAVSTPDSKLRGARYIGIPLRRSIATLDRAAVRPEARAAFGLDPNLPTLLVSGGSQGARRLNEVVQQVAPYLQQAGIQILHAVGPKNEMPQVHQMPGMPPYIPVPYVDRMDLAYAAADMMLCRAGAMTVAELSAVGLPAAYVPLPIGNGEQRLNAQPVVKAGGGLLVDDAELTPEWVQGNVLPVLADPHRLYEMSRAASEFGRRDADDLLVGMVYEAIAARHR.

UDP-N-acetyl-alpha-D-glucosamine is bound by residues 10–12, N124, R161, S195, and Q291; that span reads TAG.

It belongs to the glycosyltransferase 28 family. MurG subfamily.

It localises to the cell membrane. It catalyses the reaction di-trans,octa-cis-undecaprenyl diphospho-N-acetyl-alpha-D-muramoyl-L-alanyl-D-glutamyl-meso-2,6-diaminopimeloyl-D-alanyl-D-alanine + UDP-N-acetyl-alpha-D-glucosamine = di-trans,octa-cis-undecaprenyl diphospho-[N-acetyl-alpha-D-glucosaminyl-(1-&gt;4)]-N-acetyl-alpha-D-muramoyl-L-alanyl-D-glutamyl-meso-2,6-diaminopimeloyl-D-alanyl-D-alanine + UDP + H(+). It participates in cell wall biogenesis; peptidoglycan biosynthesis. Cell wall formation. Catalyzes the transfer of a GlcNAc subunit on undecaprenyl-pyrophosphoryl-MurNAc-pentapeptide (lipid intermediate I) to form undecaprenyl-pyrophosphoryl-MurNAc-(pentapeptide)GlcNAc (lipid intermediate II). In Streptomyces avermitilis (strain ATCC 31267 / DSM 46492 / JCM 5070 / NBRC 14893 / NCIMB 12804 / NRRL 8165 / MA-4680), this protein is UDP-N-acetylglucosamine--N-acetylmuramyl-(pentapeptide) pyrophosphoryl-undecaprenol N-acetylglucosamine transferase.